The chain runs to 157 residues: Transcription elongation factor GreA (157 aa).

The tract at residues 1-60 (MEKVPMTSAGFAALGEELKKRQSEDRPRIIEHIAEARSHGDLSENAEYHAAKEEQSHNEG) is disordered. The segment covering 16 to 60 (EELKKRQSEDRPRIIEHIAEARSHGDLSENAEYHAAKEEQSHNEG) has biased composition (basic and acidic residues). Residues 46–73 (AEYHAAKEEQSHNEGRIAELEDKLARAD) adopt a coiled-coil conformation.

This sequence belongs to the GreA/GreB family.

Functionally, necessary for efficient RNA polymerase transcription elongation past template-encoded arresting sites. The arresting sites in DNA have the property of trapping a certain fraction of elongating RNA polymerases that pass through, resulting in locked ternary complexes. Cleavage of the nascent transcript by cleavage factors such as GreA or GreB allows the resumption of elongation from the new 3'terminus. GreA releases sequences of 2 to 3 nucleotides. This is Transcription elongation factor GreA from Bradyrhizobium diazoefficiens (strain JCM 10833 / BCRC 13528 / IAM 13628 / NBRC 14792 / USDA 110).